A 339-amino-acid polypeptide reads, in one-letter code: Phenylalanine--tRNA ligase alpha subunit (339 aa).

E254 is a binding site for Mg(2+).

It belongs to the class-II aminoacyl-tRNA synthetase family. Phe-tRNA synthetase alpha subunit type 1 subfamily. In terms of assembly, tetramer of two alpha and two beta subunits. Mg(2+) is required as a cofactor.

The protein localises to the cytoplasm. It catalyses the reaction tRNA(Phe) + L-phenylalanine + ATP = L-phenylalanyl-tRNA(Phe) + AMP + diphosphate + H(+). The chain is Phenylalanine--tRNA ligase alpha subunit from Dictyoglomus thermophilum (strain ATCC 35947 / DSM 3960 / H-6-12).